Here is an 89-residue protein sequence, read N- to C-terminus: Calsenilin isoform 4 (89 aa).

Positions 27–57 (SSRDAEDQGSREGIGWQPPGRSWAHTTEQEG) are disordered.

In terms of tissue distribution, isoform 1 or isoform 4 (T+ forms) are expressed at equal levels with isoform 2 or isoform 3 (T- forms) in brain.

Unknown for isoform 4. Csen is involved in calcium-dependent transcriptional repression, regulation of potassium channels, and perhaps in processing of PSEN2 and apoptosis. This Mus musculus (Mouse) protein is Calsenilin isoform 4 (Kcnip3).